The following is a 353-amino-acid chain: Thiamine thiazole synthase 1, chloroplastic (353 aa).

Residues methionine 1–threonine 48 constitute a chloroplast transit peptide. Substrate-binding positions include alanine 97, glutamate 117–glutamine 118, glycine 125, and alanine 190. At cysteine 219 the chain carries 2,3-didehydroalanine (Cys). Substrate is bound by residues aspartate 221, histidine 236, methionine 288, and arginine 298 to glycine 300.

Belongs to the THI4 family. Homooctamer. It depends on Fe cation as a cofactor. In terms of processing, during the catalytic reaction, a sulfide is transferred from Cys-219 to a reaction intermediate, generating a dehydroalanine residue.

Its subcellular location is the plastid. The protein resides in the chloroplast. It catalyses the reaction [ADP-thiazole synthase]-L-cysteine + glycine + NAD(+) = [ADP-thiazole synthase]-dehydroalanine + ADP-5-ethyl-4-methylthiazole-2-carboxylate + nicotinamide + 3 H2O + 2 H(+). In terms of biological role, involved in biosynthesis of the thiamine precursor thiazole. Catalyzes the conversion of NAD and glycine to adenosine diphosphate 5-(2-hydroxyethyl)-4-methylthiazole-2-carboxylic acid (ADT), an adenylated thiazole intermediate. The reaction includes an iron-dependent sulfide transfer from a conserved cysteine residue of the protein to a thiazole intermediate. The enzyme can only undergo a single turnover, which suggests it is a suicide enzyme. May have additional roles in adaptation to various stress conditions and in DNA damage tolerance. This Vitis vinifera (Grape) protein is Thiamine thiazole synthase 1, chloroplastic.